The sequence spans 511 residues: 2,3-bisphosphoglycerate-independent phosphoglycerate mutase (511 aa).

Residues D14 and S64 each contribute to the Mn(2+) site. Catalysis depends on S64, which acts as the Phosphoserine intermediate. Residues H125, 155–156, R187, R193, 259–262, and K333 contribute to the substrate site; these read RD and RADR. D400, H404, D441, H442, and H460 together coordinate Mn(2+).

Belongs to the BPG-independent phosphoglycerate mutase family. As to quaternary structure, monomer. It depends on Mn(2+) as a cofactor.

The catalysed reaction is (2R)-2-phosphoglycerate = (2R)-3-phosphoglycerate. Its pathway is carbohydrate degradation; glycolysis; pyruvate from D-glyceraldehyde 3-phosphate: step 3/5. Functionally, catalyzes the interconversion of 2-phosphoglycerate and 3-phosphoglycerate. This Pseudoalteromonas atlantica (strain T6c / ATCC BAA-1087) protein is 2,3-bisphosphoglycerate-independent phosphoglycerate mutase.